A 421-amino-acid polypeptide reads, in one-letter code: Glucose-1-phosphate adenylyltransferase (421 aa).

Alpha-D-glucose 1-phosphate contacts are provided by residues Tyr109, Gly175, 190 to 191 (EK), and Ser208.

Belongs to the bacterial/plant glucose-1-phosphate adenylyltransferase family. Homotetramer.

It carries out the reaction alpha-D-glucose 1-phosphate + ATP + H(+) = ADP-alpha-D-glucose + diphosphate. Its pathway is glycan biosynthesis; glycogen biosynthesis. In terms of biological role, involved in the biosynthesis of ADP-glucose, a building block required for the elongation reactions to produce glycogen. Catalyzes the reaction between ATP and alpha-D-glucose 1-phosphate (G1P) to produce pyrophosphate and ADP-Glc. This is Glucose-1-phosphate adenylyltransferase from Teredinibacter turnerae (strain ATCC 39867 / T7901).